The sequence spans 102 residues: Large ribosomal subunit protein bL21 (102 aa).

Belongs to the bacterial ribosomal protein bL21 family. In terms of assembly, part of the 50S ribosomal subunit. Contacts protein L20.

This protein binds to 23S rRNA in the presence of protein L20. The protein is Large ribosomal subunit protein bL21 of Latilactobacillus sakei subsp. sakei (strain 23K) (Lactobacillus sakei subsp. sakei).